The following is a 242-amino-acid chain: MGRGPSIEGRKNASDAKRGKMFTKIIREISVAARAGGGDPSNNPRLRTAMDKGLSSNMSKDVMERAIKKSTGELEGVEYEEVRYEGYAPGGVAVIVDCLTDNRVRTVADVRHAFSKCGGNMGTEGSVAFMFKRLGVLSFAAGIDEDTLTDAAIDAGADDVVVYPEDGAIDVLTAPDAFAQVRDALVATGLEPAHAEITFRADNDIAVDGDTAVQVRKLLDMLEDLDDVQDVYSNVDQAALGA.

The protein belongs to the TACO1 family.

The protein localises to the cytoplasm. This chain is Probable transcriptional regulatory protein XAC3151, found in Xanthomonas axonopodis pv. citri (strain 306).